The following is a 1136-amino-acid chain: Pesticidal crystal protein Cry4B protoxin (1136 aa).

Residues 84–282 (TPERVWNDFM…PADKIDNTKL (199 aa)) form a domain I region. Residues 283–466 (SKTEFTREIY…SNRVSFAWTH (184 aa)) form a domain II region. A domain III region spans residues 467–641 (KIVDPNNQIY…PITQSVLDET (175 aa)).

Belongs to the delta endotoxin family. As to quaternary structure, in the presence of micelles active toxin forms oligomers that can be fit into cryo-EM maps as trimers. Binds to host (A.gambiae) cadherin AgCad1 (also called BT-R3), probably on the cell surface. Activated toxin may bind its host AgCad1 receptor as a monomer, but also forms an oligomer that is not active. The cofactor is Mg(2+). Treatment of recombinant protein with A.aegypti 3rd instar larvae midgut extract for 1 hour yields major bands of 72 and 45 kDa, the combined proteins are toxic to mosquitoes. Longer digestion, which removes the 72 kDa protein, yields a non-toxic preparation. Proteolysis by yields a 65 kDa toxic protein and 48 and 17 kDa fragments which are not toxic. Host (A.gambiae) larval midgut; binds to host brush border membranes, probably to cadherin-AgCad1 (Cad1, also called BT-R3).

The protein localises to the spore. Toxic activity on Trichoplusia ni insect cells stably transfected with the AgCad1/BT-R3 receptor leads to oncosis, cell death characterized by cell swelling, membrane blebbing and depletion of energy reserves. Cell death is blocked by EDTA (but not EGTA) and is partially prevented by pretreatment with NF449 (inhibits G-s-alpha-60A and adenylyl cyclase, AC) and 2',5'-dideoxyadenosine 3'-diphosphate (ddADP, inhibits AC), while H-89 and PKAI 14-22 (both inhibit protein kinase A), ouabain (inhibits Na+/K+-ATPase) and a cell exocytosis inhibitor (Exo1) nearly completely prevent the action of the toxin in this system. The cAMP analog pCPT-cAMP and the AC activator FSK enhance toxicity. Its function is as follows. A pesticidal protein active against Aedes and Anopheles mosquito species; activity on Culex species is strain dependent. It remains toxic to permethrin-resistant strains of A.gambiae. Following activation of the protoxin by mosquito larvae midgut extract (or by chymotrypsin or trypsin treatment) it becomes insecticidal. Causes mosquito cell death by activating a host G-protein-coupled receptor which subsequently activates adenylyl cyclase and increases cAMP production. cAMP activates protein kinase A which sets off a series of downstream events which includes increased exocytosis (probably bringing more receptor to the cell membrane), Na+/K+-ATPase activation and eventual host cell death. Another group suggests that alkaline phosphatase serves as the insect receptor and that the protein forms pores in insect cell membranes. The polypeptide is Pesticidal crystal protein Cry4B protoxin (Bacillus thuringiensis subsp. israelensis).